Consider the following 117-residue polypeptide: Large ribosomal subunit protein uL18 (117 aa).

Belongs to the universal ribosomal protein uL18 family. As to quaternary structure, part of the 50S ribosomal subunit; part of the 5S rRNA/L5/L18/L25 subcomplex. Contacts the 5S and 23S rRNAs.

In terms of biological role, this is one of the proteins that bind and probably mediate the attachment of the 5S RNA into the large ribosomal subunit, where it forms part of the central protuberance. The sequence is that of Large ribosomal subunit protein uL18 from Methylobacillus flagellatus (strain ATCC 51484 / DSM 6875 / VKM B-1610 / KT).